A 481-amino-acid chain; its full sequence is O-acetyltransferase andG (481 aa).

This sequence belongs to the fumigaclavine B O-acetyltransferase family. Monomer.

It functions in the pathway secondary metabolite biosynthesis; terpenoid biosynthesis. Functionally, O-acetyltransferase; part of the gene cluster that mediates the biosynthesis of anditomin, a fungal meroterpenoid. The first step of the pathway is the synthesis of 3,5-dimethylorsellinic acid (DMOA) by the polyketide synthase andM. DMOA is then converted to the phthalide compound 5,7-dihydroxy-4,6-dimethylphthalide (DHDMP) by the cytochrome P450 monooxygenase andK, which is further prenylated by the prenyltransferase andD to yield farnesyl-DHDMP. Further epoxidation by the FAD-dependent monooxygenase andE leads to epoxyfarnesyl-DHDMP. The next step involves the terpene cyclase andB that converts epoxyfarnesyl-DHDMP into preandiloid A through opening of the epoxide ring followed by the cyclization of the farnesyl moiety. Preandiloid A is in turn oxidized at the C-3 hydroxyl group to yield preandiloid B by the dehydrogenase andC. The dioxygenase andA is solely responsible for the dehydrogenation of preandiloid B leading to the enone preandiloid C, as well as for the intriguing structural rearrangement to generate the bicyclo[2.2.2]octane core, transforming preandiloid C into andiconin. FAD-binding monooxygenase andJ then produces andilesin D which is reduced by dehydrogenase andI to yield andilesin A. Action of acetyltransferase andG followed by a spontaneous acetate elimination leads then to andilesin B, which is in turn substrate of the short chain dehydrogenase andH to yield andilesin C. Finally, the dioxygenase andF catalyzes the transformation of andilesin C to anditomin. The protein is O-acetyltransferase andG of Emericella variicolor (Aspergillus stellatus).